Here is a 499-residue protein sequence, read N- to C-terminus: Probable alkaline/neutral invertase F (499 aa).

Ser-11 is modified (phosphoserine). Residue Thr-20 is modified to Phosphothreonine. The residue at position 497 (Ser-497) is a Phosphoserine.

Belongs to the glycosyl hydrolase 100 family.

It catalyses the reaction Hydrolysis of terminal non-reducing beta-D-fructofuranoside residues in beta-D-fructofuranosides.. Its function is as follows. Invertase that cleaves sucrose into glucose and fructose. This is Probable alkaline/neutral invertase F from Arabidopsis thaliana (Mouse-ear cress).